Reading from the N-terminus, the 612-residue chain is Probable translation initiation factor IF-2 (612 aa).

A tr-type G domain is found at 11–229; it reads LRQPIVVVLG…VLAGLTQRYL (219 aa). The G1 stretch occupies residues 20-27; sequence GHVDHGKT. Position 20-27 (20-27) interacts with GTP; it reads GHVDHGKT. The segment at 45-49 is G2; that stretch reads LITQH. A G3 region spans residues 84–87; it reads DTPG. GTP is bound by residues 84–88 and 138–141; these read DTPGH and NKID. Residues 138–141 form a G4 region; that stretch reads NKID. Residues 207–209 are G5; sequence SAK.

It belongs to the TRAFAC class translation factor GTPase superfamily. Classic translation factor GTPase family. IF-2 subfamily.

In terms of biological role, function in general translation initiation by promoting the binding of the formylmethionine-tRNA to ribosomes. Seems to function along with eIF-2. This is Probable translation initiation factor IF-2 from Hyperthermus butylicus (strain DSM 5456 / JCM 9403 / PLM1-5).